Here is a 448-residue protein sequence, read N- to C-terminus: MSASGPEAPGDIPALPPPPQPGSGPAPPAPAAAAQEAMDGRAELPAFPRAGAPPLAASDTVPAAPEGAGAARPAAPLRPTSFSVLDILDPNKFNSRRRRCVLLGPVAPAACAPCASAPCAPAPAASGRPPRAEELERRALAGAGGVGAAGAEPPNAGDPFKAGEAETNDTNGYSSGGGGHSPSADSGDEVPDDEDDDEDEAPETEAARGAEEARGGGGGLGARGSGCQGAAETDASPGATVDEAAAPGPRENSPVAQGPPGGAAAPGGAGTTPQGTATAAKPKRKRTGSDSKSGKPRRARTAFTYEQLVALENKFKATRYLSVCERLNLALSLSLTETQVKIWFQNRRTKWKKQNPGADTSAPTGGGGGPGPGAGPGTGLPGGLSPLSPSPPMGAPLGMHGPAGYPAHGPGGLVCAAQLPFLSSPAVLSPFVLGSQTYGAPAFYAPHL.

A compositionally biased stretch (low complexity) spans 1–13 (MSASGPEAPGDIP). Disordered stretches follow at residues 1–80 (MSAS…LRPT), 115–299 (ASAP…PRRA), and 350–397 (KWKK…GAPL). Pro residues predominate over residues 14–30 (ALPPPPQPGSGPAPPAP). Composition is skewed to low complexity over residues 62–79 (PAAP…PLRP) and 115–129 (ASAP…SGRP). Over residues 130–139 (PRAEELERRA) the composition is skewed to basic and acidic residues. Over residues 186-203 (SGDEVPDDEDDDEDEAPE) the composition is skewed to acidic residues. Residues 205-214 (EAARGAEEAR) are compositionally biased toward basic and acidic residues. Composition is skewed to gly residues over residues 215 to 227 (GGGG…GSGC) and 259 to 270 (PPGGAAAPGGAG). A compositionally biased stretch (low complexity) spans 271 to 280 (TTPQGTATAA). The segment at residues 296 to 355 (PRRARTAFTYEQLVALENKFKATRYLSVCERLNLALSLSLTETQVKIWFQNRRTKWKKQN) is a DNA-binding region (homeobox). Residues 364 to 382 (TGGGGGPGPGAGPGTGLPG) are compositionally biased toward gly residues.

It belongs to the NK-1 homeobox family. In terms of tissue distribution, expressed in hemopoietic progenitor cells.

It localises to the nucleus. Functionally, may be required for the coordinated crosstalk of factors involved in the maintenance of energy homeostasis, possibly by regulating the transcription of specific factors involved in energy balance. In Homo sapiens (Human), this protein is NK1 transcription factor-related protein 1.